The sequence spans 253 residues: Molybdate import ATP-binding protein MolC (253 aa).

Positions 5 to 229 constitute an ABC transporter domain; that stretch reads LSVENLGFYY…NLTALFHLPM (225 aa). Residue 38–45 participates in ATP binding; sequence GQNGCGKS.

The protein belongs to the ABC transporter superfamily. As to quaternary structure, the complex is composed of two ATP-binding proteins (MolC), two transmembrane proteins (MolB) and a solute-binding protein (MolA).

Its subcellular location is the cell inner membrane. It catalyses the reaction molybdate(out) + ATP + H2O = molybdate(in) + ADP + phosphate + H(+). Its activity is regulated as follows. The MolBCA complex shows a decrease in affinity in the presence of increasing concentrations of substrate and nucleotide. In terms of biological role, part of the ABC transporter complex MolBCA involved in molybdate import. Responsible for energy coupling to the transport system. Functions as a low-affinity molybdate transporter. This Haemophilus influenzae (strain ATCC 51907 / DSM 11121 / KW20 / Rd) protein is Molybdate import ATP-binding protein MolC.